A 257-amino-acid polypeptide reads, in one-letter code: Acetyl-coenzyme A carboxylase carboxyl transferase subunit beta (257 aa).

Residues 5–257 (VFTKCERCKQ…DLERLLGFVG (253 aa)) form the CoA carboxyltransferase N-terminal domain. The Zn(2+) site is built by C9, C12, C28, and C31. The C4-type zinc finger occupies 9 to 31 (CERCKQPVYEKDLRARFNVCPNC).

It belongs to the AccD/PCCB family. Acetyl-CoA carboxylase is a heterohexamer composed of biotin carboxyl carrier protein (AccB), biotin carboxylase (AccC) and two subunits each of ACCase subunit alpha (AccA) and ACCase subunit beta (AccD). Zn(2+) is required as a cofactor.

The protein resides in the cytoplasm. It carries out the reaction N(6)-carboxybiotinyl-L-lysyl-[protein] + acetyl-CoA = N(6)-biotinyl-L-lysyl-[protein] + malonyl-CoA. Its pathway is lipid metabolism; malonyl-CoA biosynthesis; malonyl-CoA from acetyl-CoA: step 1/1. In terms of biological role, component of the acetyl coenzyme A carboxylase (ACC) complex. Biotin carboxylase (BC) catalyzes the carboxylation of biotin on its carrier protein (BCCP) and then the CO(2) group is transferred by the transcarboxylase to acetyl-CoA to form malonyl-CoA. The chain is Acetyl-coenzyme A carboxylase carboxyl transferase subunit beta from Rubrobacter xylanophilus (strain DSM 9941 / JCM 11954 / NBRC 16129 / PRD-1).